A 525-amino-acid chain; its full sequence is GMP synthase [glutamine-hydrolyzing] (525 aa).

In terms of domain architecture, Glutamine amidotransferase type-1 spans 9-207 (RILILDFGSQ…VRDICQCEAL (199 aa)). Cysteine 86 acts as the Nucleophile in catalysis. Active-site residues include histidine 181 and glutamate 183. Positions 208-400 (WTPAKIIDDA…LGLPYDMLYR (193 aa)) constitute a GMPS ATP-PPase domain. 235-241 (SGGVDSS) serves as a coordination point for ATP.

As to quaternary structure, homodimer.

The catalysed reaction is XMP + L-glutamine + ATP + H2O = GMP + L-glutamate + AMP + diphosphate + 2 H(+). The protein operates within purine metabolism; GMP biosynthesis; GMP from XMP (L-Gln route): step 1/1. Catalyzes the synthesis of GMP from XMP. This chain is GMP synthase [glutamine-hydrolyzing], found in Shigella flexneri serotype 5b (strain 8401).